The following is a 309-amino-acid chain: Foldase protein PrsA (309 aa).

The N-terminal stretch at 1–22 (MKTRSKLAAGFLTLMSVATLAA) is a signal peptide. A lipid anchor (N-palmitoyl cysteine) is attached at Cys-23. Residue Cys-23 is the site of S-diacylglycerol cysteine attachment. Residues 146 to 241 (TPETSVQVIK…TSYYIIKVTD (96 aa)) enclose the PpiC domain.

The protein belongs to the PrsA family.

The protein localises to the cell membrane. The catalysed reaction is [protein]-peptidylproline (omega=180) = [protein]-peptidylproline (omega=0). Plays a major role in protein secretion by helping the post-translocational extracellular folding of several secreted proteins. The chain is Foldase protein PrsA from Streptococcus agalactiae serotype V (strain ATCC BAA-611 / 2603 V/R).